The sequence spans 374 residues: Proteinase-activated receptor 3 (374 aa).

The signal sequence occupies residues 1–21 (MKALIFAAAGLLLLLPTFCQS). Residues 22–38 (GMENDTNNLAKPTLPIK) constitute a propeptide, removed for receptor activation. Residues N25 and N82 are each glycosylated (N-linked (GlcNAc...) asparagine). Residues 39 to 94 (TFRGAPPNSFEEFPFSALEGWTGATITVKIKCPEESASHLHVKNATMGYLTSSLST) lie on the Extracellular side of the membrane. The chain crosses the membrane as a helical span at residues 95–120 (KLIPAIYLLVFVVGVPANAVTLWMLF). Residues 121–128 (FRTRSICT) are Cytoplasmic-facing. The chain crosses the membrane as a helical span at residues 129–148 (TVFYTNLAIADFLFCVTLPF). At 149–167 (KIAYHLNGNNWVFGEVLCR) the chain is on the extracellular side. Cysteines 166 and 245 form a disulfide. Residues 168 to 189 (ATTVIFYGNMYCSILLLACISI) form a helical membrane-spanning segment. Over 190–206 (NRYLAIVHPFTYRGLPK) the chain is Cytoplasmic. A helical transmembrane segment spans residues 207-230 (HTYALVTCGLVWATVFLYMLPFFI). The Extracellular portion of the chain corresponds to 231–260 (LKQEYYLVQPDITTCHDVHNTCESSSPFQL). Residues 261–280 (YYFISLAFFGFLIPFVLIIY) traverse the membrane as a helical segment. Residues 281–297 (CYAAIIRTLNAYDHRWL) are Cytoplasmic-facing. Residues 298–322 (WYVKASLLILVIFTICFAPSNIILI) traverse the membrane as a helical segment. The Extracellular segment spans residues 323–336 (IHHANYYYNNTDGL). N331 carries an N-linked (GlcNAc...) asparagine glycan. The chain crosses the membrane as a helical span at residues 337–361 (YFIYLIALCLGSLNSCLDPFLYFLM). Over 362–374 (SKTRNHSTAYLTK) the chain is Cytoplasmic.

It belongs to the G-protein coupled receptor 1 family. As to quaternary structure, interacts with INSC/inscuteable and probably GPSM2. Post-translationally, a proteolytic cleavage generates a new N-terminus that functions as a tethered ligand. As to expression, highest expression in the megakaryocytes of the bone marrow, lower in mature megakaryocytes, in platelets and in a variety of other tissues such as heart and gut.

It localises to the cell membrane. In terms of biological role, receptor for activated thrombin coupled to G proteins that stimulate phosphoinositide hydrolysis. The polypeptide is Proteinase-activated receptor 3 (F2RL2) (Homo sapiens (Human)).